We begin with the raw amino-acid sequence, 132 residues long: uncharacterized protein (132 aa).

2 helical membrane passes run 44–64 (FMSFISFIVSCRLFILVFTFI) and 75–95 (IAMIDAVVNALLILIVLAMLF).

Its subcellular location is the cytoplasm. The protein localises to the membrane. This is an uncharacterized protein from Schizosaccharomyces pombe (strain 972 / ATCC 24843) (Fission yeast).